A 254-amino-acid chain; its full sequence is 5-oxoprolinase subunit A (254 aa).

It belongs to the LamB/PxpA family. Forms a complex composed of PxpA, PxpB and PxpC.

The catalysed reaction is 5-oxo-L-proline + ATP + 2 H2O = L-glutamate + ADP + phosphate + H(+). Its function is as follows. Catalyzes the cleavage of 5-oxoproline to form L-glutamate coupled to the hydrolysis of ATP to ADP and inorganic phosphate. The sequence is that of 5-oxoprolinase subunit A from Acinetobacter baumannii (strain ACICU).